The primary structure comprises 676 residues: UvrABC system protein B (676 aa).

The region spanning 26 to 414 (EGLDAGLAHQ…SAGEIADQVV (389 aa)) is the Helicase ATP-binding domain. 39-46 (GVTGSGKT) is a binding site for ATP. Positions 92–115 (YYDYYQPEAYVPTTDTFIEKDASV) match the Beta-hairpin motif. Residues 432 to 598 (QVDDLLSEIR…ALKRNIKDIM (167 aa)) enclose the Helicase C-terminal domain. In terms of domain architecture, UVR spans 636 to 671 (EKEISRLEAAMYQHAQDLEFELAAEKRDEIEKLRAQ).

The protein belongs to the UvrB family. As to quaternary structure, forms a heterotetramer with UvrA during the search for lesions. Interacts with UvrC in an incision complex.

Its subcellular location is the cytoplasm. Its function is as follows. The UvrABC repair system catalyzes the recognition and processing of DNA lesions. A damage recognition complex composed of 2 UvrA and 2 UvrB subunits scans DNA for abnormalities. Upon binding of the UvrA(2)B(2) complex to a putative damaged site, the DNA wraps around one UvrB monomer. DNA wrap is dependent on ATP binding by UvrB and probably causes local melting of the DNA helix, facilitating insertion of UvrB beta-hairpin between the DNA strands. Then UvrB probes one DNA strand for the presence of a lesion. If a lesion is found the UvrA subunits dissociate and the UvrB-DNA preincision complex is formed. This complex is subsequently bound by UvrC and the second UvrB is released. If no lesion is found, the DNA wraps around the other UvrB subunit that will check the other stand for damage. This chain is UvrABC system protein B, found in Vibrio parahaemolyticus serotype O3:K6 (strain RIMD 2210633).